A 237-amino-acid polypeptide reads, in one-letter code: V-type proton ATPase subunit E3 (237 aa).

Position 1 is an N-acetylmethionine (M1). Positions 9 to 67 form a coiled coil; it reads QIQQMVRFIRQEAEEKANEISISSEEEFNIEKLQLVEAEKKKIRQEYEKKEKQVDVRKK.

Belongs to the V-ATPase E subunit family. As to quaternary structure, V-ATPase is a heteromultimeric enzyme composed of a peripheral catalytic V1 complex (components A to H) attached to an integral membrane V0 proton pore complex (components: a, c, c'', d and e).

It is found in the vacuole membrane. In terms of biological role, subunit of the peripheral V1 complex of vacuolar ATPase essential for assembly or catalytic function. V-ATPase is responsible for acidifying a variety of intracellular compartments in eukaryotic cells. This Arabidopsis thaliana (Mouse-ear cress) protein is V-type proton ATPase subunit E3 (VHA-E3).